The following is a 317-amino-acid chain: GPI-specific phospholipase A2-like PGAP3 (317 aa).

Residues 1-18 form the signal peptide; it reads MAPFLVLFLAGVVSASRG. At 19–93 the chain is on the lumenal side; it reads DREPVYRDCV…QFHGKWPFSR (75 aa). N-linked (GlcNAc...) asparagine glycosylation occurs at Asn35. The chain crosses the membrane as a helical span at residues 94–114; it reads FLFFQEPASALASFLNGVASL. Topologically, residues 115 to 132 are cytoplasmic; it reads LMLFRYRSSVPSSCQMYR. Residues 133–153 traverse the membrane as a helical segment; that stretch reads TCLAFSMVSVNAWFWSTIFHT. Residues 154–163 are Lumenal-facing; sequence RDTALTEKMD. The helical transmembrane segment at 164 to 180 threads the bilayer; the sequence is YFCASSVILHSIYLCCM. Over 181–189 the chain is Cytoplasmic; the sequence is RTFGLQYPS. A helical transmembrane segment spans residues 190 to 210; the sequence is IANAFGAFLVLLFACHISYLT. At 211-219 the chain is on the lumenal side; it reads LGRFDYSYN. A helical membrane pass occupies residues 220–240; that stretch reads MAANTSFGIVNLMWWLAWCMW. Residues 241-251 lie on the Cytoplasmic side of the membrane; the sequence is RRFHQPYLWKC. Residues 252–272 traverse the membrane as a helical segment; the sequence is VLVVVLLQSLALLELLDFPPV. Position 273 (Met273) is a topological domain, lumenal. A helical membrane pass occupies residues 274–293; it reads WILDAHALWHFSTIPLHFLF. At 294–317 the chain is on the cytoplasmic side; sequence YSFLRDDSLYLLKVNHDDDIPKLD.

Belongs to the PGAP3 family.

Its subcellular location is the golgi apparatus membrane. In terms of biological role, involved in the fatty acid remodeling steps of GPI-anchor maturation where the unsaturated acyl chain at sn-2 of inositol phosphate is replaced by a saturated stearoyl chain. May catalyze the first step of the fatty acid remodeling, by removing the unsaturated acyl chain at sn-2 of inositol phosphate, generating a lyso-GPI intermediate. The fatty acid remodeling steps is critical for the integration of GPI-APs into lipid rafts. The chain is GPI-specific phospholipase A2-like PGAP3 from Xenopus laevis (African clawed frog).